The following is a 32-amino-acid chain: Alpha-conotoxin RgIA (32 aa).

A propeptide spanning residues 1-19 (SNKRKNAAMLDMIAQHAIR) is cleaved from the precursor. Disulfide bonds link C21/C27 and C22/C31.

The protein belongs to the conotoxin A superfamily. Post-translationally, the disulfide bond CysI-CysIII is important for alpha-9-alpha-10 subtype inhibition, whereas the bond CysII-CysIV contributes to GABA(B) modulation. Expressed by the venom duct.

Its subcellular location is the secreted. This toxin target two types of receptors, the nicotinic acetylcholine receptor (nAChR) and the G-protein-coupled receptor GABA(B). It specifically inhibits the alpha-9-alpha-10/CHRNA9-CHRNA10 nAChR, with preference for rat receptors. It interacts with the alpha-10(+)/alpha-9(-)interface of the receptor. It shows a two order of magnitude species difference potency for the rat versus human alpha-9-alpha-10 nAChR, due to the Thr-86 located in the alpha-9 nAChR subunit. This toxin also shows inhibition of high voltage-activated (HVA) calcium channels (Cav2.2) by acting on GABA(B) receptors (GABBR1 and GABBR2). In vivo, this toxin produces an acute antinociceptive effect in peripheral nerve-injured rats, which may be related to the inhibition of immune cell buildup at the site of nerve injury. In addition, when intramuscularly injected into rats following chronic constriction injury of the sciatic nerve, this toxin protects peripheral nervous tissues as well as prevents central maladaptive plasticity by inhibiting glial cell activation. This is Alpha-conotoxin RgIA from Conus regius (Crown cone).